Here is a 188-residue protein sequence, read N- to C-terminus: COMM domain-containing protein 1 (188 aa).

The tract at residues 1–122 is sufficient for interaction with SLC12A2; sequence MAAELEGSKA…RWDSGLRGLS (122 aa). Cu cation-binding residues include His100, Met109, and His133. One can recognise a COMM domain in the interval 117–185; sequence GLRGLSWRVD…EVEESISTLM (69 aa). Positions 124 to 188 are required for binding to PtdIns(4,5)P2; the sequence is RVDGKSQSRH…ESISTLMQPA (65 aa).

It belongs to the COMM domain-containing protein 1 family. Component of the commander complex consisting of the CCC subcomplex and the retriever subcomplex. Component of the CCC (COMMD/CCDC22/CCDC93) subcomplex consisting of COMMD1, COMMD2, COMMD3, COMMD4, COMMD5, COMMD6, COMMD7, COMMD8, COMMD9, COMMD10, CCDC22 and CCDC93; within the complex forms a heterodimer with COMMD6. Interacts with VPS35L; the interaction associates the CCC complex with the retriever complex. Identified in a complex with an E3 ubiquitin ligase complex composed of TCEB1/elongin C, CUL2, SOCS1 and RBX1; in the complex interacts directly with SOCS1 and CUL2. Identified in a complex with NF-kappa-B. Interacts directly with SLC12A2. Interacts directly with ATP7B (via the N-terminal region). Interacts with ATP7A. Interacts with FAM107A; this interaction stabilizes COMMD1 in the nucleus. Interacts with CCS, CDKN2A, RELA, REL, RELB, NFKB1/p105, NFKB2/p100, NFKBIB, SCNN1D, SCNN1B, CFTR, CLU, SGK1, AKT1, CUL1, CUL2, CUL3, CUL4A, CUL4B, CUL5, CUL7, HIF1A. In terms of processing, ubiquitinated; undergoes both 'Lys-63'- and 'Lys-48'-linked polyubiquitination. Ubiquitinated by XIAP, leading to its proteasomal degradation.

The protein resides in the nucleus. It is found in the cytoplasm. It localises to the endosome membrane. Its subcellular location is the cytoplasmic vesicle. The protein localises to the early endosome. The protein resides in the recycling endosome. In terms of biological role, scaffold protein in the commander complex that is essential for endosomal recycling of transmembrane cargos; the commander complex is composed of the CCC subcomplex and the retriever subcomplex. Can modulate activity of cullin-RING E3 ubiquitin ligase (CRL) complexes by displacing CAND1; in vitro promotes CRL E3 activity and dissociates CAND1 from CUL1 and CUL2. Promotes ubiquitination of NF-kappa-B subunit RELA and its subsequent proteasomal degradation. Down-regulates NF-kappa-B activity. Involved in the regulation of membrane expression and ubiquitination of SLC12A2. Modulates Na(+) transport in epithelial cells by regulation of apical cell surface expression of amiloride-sensitive sodium channel (ENaC) subunits and by promoting their ubiquitination presumably involving NEDD4L. Promotes the localization of SCNN1D to recycling endosomes. Promotes CFTR cell surface expression through regulation of its ubiquitination. Down-regulates SOD1 activity by interfering with its homodimerization. Plays a role in copper ion homeostasis. Involved in copper-dependent ATP7A trafficking between the trans-Golgi network and vesicles in the cell periphery; the function is proposed to depend on its association within the CCC complex and cooperation with the WASH complex on early endosomes. Can bind one copper ion per monomer. May function to facilitate biliary copper excretion within hepatocytes. Binds to phosphatidylinositol 4,5-bisphosphate (PtdIns(4,5)P2). Involved in the regulation of HIF1A-mediated transcription; competes with ARNT/Hif-1-beta for binding to HIF1A resulting in decreased DNA binding and impaired transcriptional activation by HIF-1. Negatively regulates neuroblastoma G1/S phase cell cycle progression and cell proliferation by stimulating ubiquitination of NF-kappa-B subunit RELA and NF-kappa-B degradation in a FAM107A- and actin-dependent manner. This is COMM domain-containing protein 1 (COMMD1) from Canis lupus familiaris (Dog).